Consider the following 156-residue polypeptide: Transcription elongation factor GreA 1 (156 aa).

Residues 43–74 adopt a coiled-coil conformation; sequence RSENAEYSSAKRDLGRLESRLRYLNKQLQYAQ.

The protein belongs to the GreA/GreB family.

Functionally, necessary for efficient RNA polymerase transcription elongation past template-encoded arresting sites. The arresting sites in DNA have the property of trapping a certain fraction of elongating RNA polymerases that pass through, resulting in locked ternary complexes. Cleavage of the nascent transcript by cleavage factors such as GreA or GreB allows the resumption of elongation from the new 3'terminus. GreA releases sequences of 2 to 3 nucleotides. In Lactiplantibacillus plantarum (strain ATCC BAA-793 / NCIMB 8826 / WCFS1) (Lactobacillus plantarum), this protein is Transcription elongation factor GreA 1.